Reading from the N-terminus, the 504-residue chain is Maturase K (504 aa).

Belongs to the intron maturase 2 family. MatK subfamily.

The protein localises to the plastid. It is found in the chloroplast. Its function is as follows. Usually encoded in the trnK tRNA gene intron. Probably assists in splicing its own and other chloroplast group II introns. The chain is Maturase K from Betula papyrifera (Paper birch).